The following is a 236-amino-acid chain: LexA repressor (236 aa).

Positions 26–46 (FDEMKDALDLRSKSGIHRLIT) form a DNA-binding region, H-T-H motif. The segment at 85 to 109 (PSVIEGNLGKVRPPSPTPAEDDHDR) is disordered. Residues Ser-157 and Lys-195 each act as for autocatalytic cleavage activity in the active site.

This sequence belongs to the peptidase S24 family. In terms of assembly, homodimer.

It catalyses the reaction Hydrolysis of Ala-|-Gly bond in repressor LexA.. Its function is as follows. Represses a number of genes involved in the response to DNA damage (SOS response), including recA and lexA. In the presence of single-stranded DNA, RecA interacts with LexA causing an autocatalytic cleavage which disrupts the DNA-binding part of LexA, leading to derepression of the SOS regulon and eventually DNA repair. In Rhodopseudomonas palustris (strain ATCC BAA-98 / CGA009), this protein is LexA repressor.